A 633-amino-acid chain; its full sequence is Putative oligopeptide transporter HI_0561 (633 aa).

Transmembrane regions (helical) follow at residues 8–28, 45–65, 70–90, 128–148, 180–200, 230–250, 281–301, 311–331, 345–365, 379–399, 420–440, 483–503, 515–535, 564–584, and 604–624; these read GVTF…LKFF, SAGT…MGYW, FWQT…FTIP, IAYG…LRVM, IGIV…GVAV, IGVG…MKPM, MIYI…HFIA, ILLV…VAAA, PISG…VSIG, FLTA…CISN, VALI…LEIL, WTYI…DAFL, VIAV…VIVG, LFSA…AFII, and WDTI…VIFA.

Belongs to the oligopeptide OPT transporter family.

It localises to the cell membrane. In Haemophilus influenzae (strain ATCC 51907 / DSM 11121 / KW20 / Rd), this protein is Putative oligopeptide transporter HI_0561.